The primary structure comprises 417 residues: Gamma-glutamyl phosphate reductase (417 aa).

Belongs to the gamma-glutamyl phosphate reductase family.

The protein resides in the cytoplasm. The enzyme catalyses L-glutamate 5-semialdehyde + phosphate + NADP(+) = L-glutamyl 5-phosphate + NADPH + H(+). The protein operates within amino-acid biosynthesis; L-proline biosynthesis; L-glutamate 5-semialdehyde from L-glutamate: step 2/2. Its function is as follows. Catalyzes the NADPH-dependent reduction of L-glutamate 5-phosphate into L-glutamate 5-semialdehyde and phosphate. The product spontaneously undergoes cyclization to form 1-pyrroline-5-carboxylate. This chain is Gamma-glutamyl phosphate reductase, found in Escherichia coli O8 (strain IAI1).